The primary structure comprises 261 residues: Potassium/proton antiporter CemA (261 aa).

Transmembrane regions (helical) follow at residues 138-158, 186-206, and 221-241; these read IISH…CLIL, ILLV…ELMI, and IISG…KYWI.

It belongs to the CemA family.

It is found in the plastid. The protein resides in the chloroplast inner membrane. It catalyses the reaction K(+)(in) + H(+)(out) = K(+)(out) + H(+)(in). Contributes to K(+)/H(+) antiport activity by supporting proton efflux to control proton extrusion and homeostasis in chloroplasts in a light-dependent manner to modulate photosynthesis. Prevents excessive induction of non-photochemical quenching (NPQ) under continuous-light conditions. Indirectly promotes efficient inorganic carbon uptake into chloroplasts. In Cryptomeria japonica (Japanese cedar), this protein is Potassium/proton antiporter CemA.